We begin with the raw amino-acid sequence, 192 residues long: Ion-translocating oxidoreductase complex subunit A (192 aa).

The next 6 helical transmembrane spans lie at 5-25 (LLLLISTVLVNNFVLVKFLGL), 39-59 (IGMSMATTFVLTLASILSYLV), 65-85 (LPFDLSYLRTMSFILVIAVVV), 102-122 (ALGIYLPLITTNCAVLGVALL), 134-154 (AIFGFGAALGFSLVLILFSAM), and 171-191 (AIAMITAGLMSLAFMGFTGLV).

Belongs to the NqrDE/RnfAE family. In terms of assembly, the complex is composed of six subunits: RnfA, RnfB, RnfC, RnfD, RnfE and RnfG.

The protein localises to the cell inner membrane. Part of a membrane-bound complex that couples electron transfer with translocation of ions across the membrane. In Shewanella baltica (strain OS223), this protein is Ion-translocating oxidoreductase complex subunit A.